A 282-amino-acid polypeptide reads, in one-letter code: uncharacterized protein (282 aa).

Disordered stretches follow at residues 1 to 45 and 201 to 259; these read MPLE…EEDE and DRRR…KPWG. Basic and acidic residues predominate over residues 10–19; that stretch reads SEMKEFKEST. Over residues 26 to 38 the composition is skewed to polar residues; sequence SVSSEETLTQSMV. Positions 201–237 are enriched in basic and acidic residues; it reads DRRRKEDSKARSRLTRREEHSEHHRSGKSRRERERRS.

This is an uncharacterized protein from Ostreid herpesvirus 1 (isolate France) (OsHV-1).